The sequence spans 380 residues: Cytochrome b (380 aa).

4 helical membrane passes run 34 to 54 (FGSLLGICLMTQILTGLLLAM), 78 to 99 (WLIRNLHANGASLFFICIYLHI), 114 to 134 (WNTGVILLLTLMATAFVGYVL), and 179 to 199 (FFALHFLLPFIIAGLTLIHLT). Heme b contacts are provided by His-84 and His-98. Heme b contacts are provided by His-183 and His-197. Residue His-202 participates in a ubiquinone binding. 4 helical membrane-spanning segments follow: residues 227–247 (TKDILGFIILLLPLMTLAMFA), 289–309 (LGGVLALAASVLVLFLAPFLH), 321–341 (LSQLLFWTLVANLFILTWIGS), and 348–368 (FIITGQLASLTYFTILLILFP).

The protein belongs to the cytochrome b family. In terms of assembly, the cytochrome bc1 complex contains 11 subunits: 3 respiratory subunits (MT-CYB, CYC1 and UQCRFS1), 2 core proteins (UQCRC1 and UQCRC2) and 6 low-molecular weight proteins (UQCRH/QCR6, UQCRB/QCR7, UQCRQ/QCR8, UQCR10/QCR9, UQCR11/QCR10 and a cleavage product of UQCRFS1). This cytochrome bc1 complex then forms a dimer. Requires heme b as cofactor.

It is found in the mitochondrion inner membrane. Functionally, component of the ubiquinol-cytochrome c reductase complex (complex III or cytochrome b-c1 complex) that is part of the mitochondrial respiratory chain. The b-c1 complex mediates electron transfer from ubiquinol to cytochrome c. Contributes to the generation of a proton gradient across the mitochondrial membrane that is then used for ATP synthesis. This chain is Cytochrome b (MT-CYB), found in Aphanotriccus audax (Black-billed flycatcher).